The following is a 122-amino-acid chain: Large ribosomal subunit protein bL12 (122 aa).

It belongs to the bacterial ribosomal protein bL12 family. As to quaternary structure, homodimer. Part of the ribosomal stalk of the 50S ribosomal subunit. Forms a multimeric L10(L12)X complex, where L10 forms an elongated spine to which 2 to 4 L12 dimers bind in a sequential fashion. Binds GTP-bound translation factors.

In terms of biological role, forms part of the ribosomal stalk which helps the ribosome interact with GTP-bound translation factors. Is thus essential for accurate translation. This Stenotrophomonas maltophilia (strain R551-3) protein is Large ribosomal subunit protein bL12.